A 459-amino-acid chain; its full sequence is FBD-associated F-box protein At4g13985 (459 aa).

In terms of domain architecture, F-box spans 18-64 (VDRLRNLPDCLLFKILLNLPTKDVVKLSVLSRRWRNVWRYVPGLDLE). The FBD domain occupies 375-429 (KEGANILPGPRRFLTSLEYVKIAKPMAAEASEIKLKLVSYFLENSTILKKLTLCL).

This is FBD-associated F-box protein At4g13985 from Arabidopsis thaliana (Mouse-ear cress).